Consider the following 611-residue polypeptide: Translation initiation factor RLI1 (611 aa).

2 4Fe-4S ferredoxin-type domains span residues 7 to 31 (RVAI…SCPV) and 46 to 75 (RIAF…IINL). ABC transporter domains lie at 77–318 (TNLE…FLDG) and 345–565 (AEKS…LKNL). ATP-binding positions include 110–117 (GTNGIGKS) and 382–389 (GENGTGKT).

This sequence belongs to the ABC transporter superfamily. ABCE family. In terms of assembly, component of the multifactor complex (MFC). The complex associates with pre-initiation complexes.

The protein resides in the cytoplasm. The protein localises to the nucleus. Functionally, component of the multifactor complex (MFC) involved in translation initiation. Required for the binding of MFC to the 40S ribosome. Required for the processing and nuclear export of the 60S and 40S ribosomal subunits. This is Translation initiation factor RLI1 (RLI1) from Chaetomium thermophilum (strain DSM 1495 / CBS 144.50 / IMI 039719) (Thermochaetoides thermophila).